Consider the following 290-residue polypeptide: D-tagatose-1,6-bisphosphate aldolase subunit KbaY (290 aa).

The active-site Proton donor is Asp-82. Residues His-83 and His-180 each contribute to the Zn(2+) site. A dihydroxyacetone phosphate-binding site is contributed by Gly-181. His-208 is a binding site for Zn(2+). Dihydroxyacetone phosphate is bound by residues 209–211 (GAS) and 230–233 (NVAT).

This sequence belongs to the class II fructose-bisphosphate aldolase family. TagBP aldolase KbaY subfamily. In terms of assembly, homotetramer. Forms a complex with KbaZ. Zn(2+) serves as cofactor.

The catalysed reaction is D-tagatofuranose 1,6-bisphosphate = D-glyceraldehyde 3-phosphate + dihydroxyacetone phosphate. It participates in carbohydrate metabolism; D-tagatose 6-phosphate degradation; D-glyceraldehyde 3-phosphate and glycerone phosphate from D-tagatose 6-phosphate: step 2/2. Functionally, catalytic subunit of the tagatose-1,6-bisphosphate aldolase KbaYZ, which catalyzes the reversible aldol condensation of dihydroxyacetone phosphate (DHAP or glycerone-phosphate) with glyceraldehyde 3-phosphate (G3P) to produce tagatose 1,6-bisphosphate (TBP). Requires KbaZ subunit for full activity and stability. This chain is D-tagatose-1,6-bisphosphate aldolase subunit KbaY, found in Salmonella arizonae (strain ATCC BAA-731 / CDC346-86 / RSK2980).